We begin with the raw amino-acid sequence, 29 residues long: Pyridoxal 5'-phosphate synthase subunit PdxS (29 aa).

This sequence belongs to the PdxS/SNZ family. As to quaternary structure, in the presence of PdxT, forms a dodecamer of heterodimers.

It catalyses the reaction aldehydo-D-ribose 5-phosphate + D-glyceraldehyde 3-phosphate + L-glutamine = pyridoxal 5'-phosphate + L-glutamate + phosphate + 3 H2O + H(+). Its pathway is cofactor biosynthesis; pyridoxal 5'-phosphate biosynthesis. Its function is as follows. Catalyzes the formation of pyridoxal 5'-phosphate from ribose 5-phosphate (RBP), glyceraldehyde 3-phosphate (G3P) and ammonia. The ammonia is provided by the PdxT subunit. Can also use ribulose 5-phosphate and dihydroxyacetone phosphate as substrates, resulting from enzyme-catalyzed isomerization of RBP and G3P, respectively. The chain is Pyridoxal 5'-phosphate synthase subunit PdxS from Clostridium pasteurianum.